The primary structure comprises 194 residues: Inosine triphosphate pyrophosphatase (194 aa).

An N-acetylalanine modification is found at Ala2. 14-19 (TGNAKK) lines the ITP pocket. A Mg(2+)-binding site is contributed by Glu44. Residues Lys56, 72–73 (DT), Lys89, 149–152 (FGWD), Lys172, and 177–178 (HR) each bind ITP.

This sequence belongs to the HAM1 NTPase family. As to quaternary structure, homodimer. Mg(2+) is required as a cofactor. As to expression, ubiquitous. Highly expressed in heart, liver, sex glands, thyroid and adrenal gland.

It is found in the cytoplasm. The enzyme catalyses ITP + H2O = IMP + diphosphate + H(+). It carries out the reaction dITP + H2O = dIMP + diphosphate + H(+). The catalysed reaction is XTP + H2O = XMP + diphosphate + H(+). It catalyses the reaction N(6)-hydroxy-dATP + H2O = N(6)-hydroxy-dAMP + diphosphate + H(+). Its function is as follows. Pyrophosphatase that hydrolyzes the non-canonical purine nucleotides inosine triphosphate (ITP), deoxyinosine triphosphate (dITP) as well as 2'-deoxy-N-6-hydroxylaminopurine triphosphate (dHAPTP) and xanthosine 5'-triphosphate (XTP) to their respective monophosphate derivatives. The enzyme does not distinguish between the deoxy- and ribose forms. Probably excludes non-canonical purines from RNA and DNA precursor pools, thus preventing their incorporation into RNA and DNA and avoiding chromosomal lesions. The sequence is that of Inosine triphosphate pyrophosphatase from Homo sapiens (Human).